The primary structure comprises 164 residues: MD-2-related lipid-recognition protein 3 (164 aa).

An N-terminal signal peptide occupies residues 1 to 24; it reads MAMSHVQPMLLLLVSLFFLPALRG.

In terms of assembly, interacts with RUB1/NEDD8. Post-translationally, neddylated. Ubiquitinated.

Its subcellular location is the vacuole. It localises to the endoplasmic reticulum. May be involved in herbivory-mediated responses. May play a role in herbivory-associated molecular pattern (HAMP) recognition. May function is jasmonate (JA) signaling in response to HAMP. May play a role in defense response against the pathogens Altenaria brassicicola and Pseudomonas syringae. In Arabidopsis thaliana (Mouse-ear cress), this protein is MD-2-related lipid-recognition protein 3.